We begin with the raw amino-acid sequence, 242 residues long: Sugar fermentation stimulation protein homolog (242 aa).

It belongs to the SfsA family.

The protein is Sugar fermentation stimulation protein homolog of Rippkaea orientalis (strain PCC 8801 / RF-1) (Cyanothece sp. (strain PCC 8801)).